The sequence spans 200 residues: MMPFGKISQQLCGVKKLPWSCDSRYFWGWLNAVFNKVDYDRIRDVGPDRAASEWLLRCGAMVRYHGQERWQKDYNHLPTGPLDKYKIQAIDATDSCIMSIGFDHMEGLEHVEKIRLCKCHYIEDDCLLRLSQLENLQKTILEMEIISCGNITDKGIIALRHLRNLKYLLLSDLPGVREKENLVQAFKTALPSLELKLQLK.

The transit peptide at 1-25 (MMPFGKISQQLCGVKKLPWSCDSRY) directs the protein to the mitochondrion. The interval 1–61 (MMPFGKISQQ…SEWLLRCGAM (61 aa)) is N-terminal domain. Gly59 contributes to the Mg(2+) binding site. 4 LRR repeats span residues 62 to 87 (VRYH…KYKI), 88 to 116 (QAID…KIRL), 117 to 141 (CKCH…KTIL), and 142 to 173 (EMEI…LSDL). Thr93 lines the Mg(2+) pocket.

It belongs to the ATP synthase subunit s family. As to quaternary structure, homotetramer. Associates with ATP synthase.

Its subcellular location is the mitochondrion. It localises to the mitochondrion inner membrane. Functionally, involved in regulation of mitochondrial membrane ATP synthase. Necessary for H(+) conduction of ATP synthase. Facilitates energy-driven catalysis of ATP synthesis by blocking a proton leak through an alternative proton exit pathway. The protein is ATP synthase subunit s, mitochondrial of Homo sapiens (Human).